Reading from the N-terminus, the 449-residue chain is Glutamate--tRNA ligase 1 (449 aa).

The short motif at 11–21 (PSPTGSLHVGN) is the 'HIGH' region element. A 'KMSKS' region motif is present at residues 242–246 (PLSKR). Lys-245 provides a ligand contact to ATP.

This sequence belongs to the class-I aminoacyl-tRNA synthetase family. Glutamate--tRNA ligase type 1 subfamily. In terms of assembly, monomer.

Its subcellular location is the cytoplasm. The catalysed reaction is tRNA(Glu) + L-glutamate + ATP = L-glutamyl-tRNA(Glu) + AMP + diphosphate. Catalyzes the attachment of glutamate to tRNA(Glu) in a two-step reaction: glutamate is first activated by ATP to form Glu-AMP and then transferred to the acceptor end of tRNA(Glu). In Parvibaculum lavamentivorans (strain DS-1 / DSM 13023 / NCIMB 13966), this protein is Glutamate--tRNA ligase 1.